The primary structure comprises 96 residues: Transcription and mRNA export factor SUS1 (96 aa).

A Glycyl lysine isopeptide (Lys-Gly) (interchain with G-Cter in ubiquitin) cross-link involves residue K68.

It belongs to the ENY2 family. Component of the nuclear pore complex (NPC)-associated TREX-2 complex (transcription and export complex 2), composed of at least SUS1, SAC3, THP1, SEM1, and CDC31. TREX-2 contains 2 SUS1 chains. The TREX-2 complex interacts with the nucleoporin NUP1. Component of the 1.8 MDa SAGA transcription coactivator-HAT complex. SAGA is built of 5 distinct domains with specialized functions. Within the SAGA complex, SUS1, SGF11, SGF73 and UBP8 form an additional subcomplex of SAGA called the DUB module (deubiquitination module). Interacts directly with THP1, SAC3, SGF11, and with the RNA polymerase II.

The protein resides in the nucleus. It localises to the nucleoplasm. It is found in the cytoplasm. Its subcellular location is the P-body. In terms of biological role, involved in mRNA export coupled transcription activation by association with both the TREX-2 and the SAGA complexes. At the promoters, SAGA is required for recruitment of the basal transcription machinery. It influences RNA polymerase II transcriptional activity through different activities such as TBP interaction and promoter selectivity, interaction with transcription activators, and chromatin modification through histone acetylation and deubiquitination. Within the SAGA complex, participates in a subcomplex required for deubiquitination of H2B and for the maintenance of steady-state H3 methylation levels. The TREX-2 complex functions in docking export-competent ribonucleoprotein particles (mRNPs) to the nuclear entrance of the nuclear pore complex (nuclear basket). TREX-2 participates in mRNA export and accurate chromatin positioning in the nucleus by tethering genes to the nuclear periphery. May also be involved in cytoplasmic mRNA decay by interaction with components of P-bodies. The protein is Transcription and mRNA export factor SUS1 of Saccharomyces cerevisiae (strain YJM789) (Baker's yeast).